The sequence spans 520 residues: Tubby-related protein 2 (520 aa).

Phosphoserine occurs at positions 135 and 190. Residues 141-236 are disordered; the sequence is EVSVENGSVS…GTNSSAAHNE (96 aa). Basic and acidic residues predominate over residues 211 to 223; sequence QKEEDLEKKREAS. A compositionally biased stretch (polar residues) spans 224 to 233; the sequence is ESTGTNSSAA.

It belongs to the TUB family. Strongly expressed in testis. Also expressed in retina. Expressed in cancer cell lines.

The protein localises to the cytoplasm. The protein resides in the secreted. In Homo sapiens (Human), this protein is Tubby-related protein 2 (TULP2).